The primary structure comprises 91 residues: Small ribosomal subunit protein bS20 (91 aa).

The disordered stretch occupies residues 1 to 26 (MANLKSSKKDIRRTARRKERNGEDRT).

The protein belongs to the bacterial ribosomal protein bS20 family.

Binds directly to 16S ribosomal RNA. This chain is Small ribosomal subunit protein bS20, found in Leptospira biflexa serovar Patoc (strain Patoc 1 / Ames).